Here is a 551-residue protein sequence, read N- to C-terminus: MFVVRRSIVFQQSRRQFSGSIAWLQACSSCGIKLQSKNPALIGYYTKPKPLEVGKVETLEDVKYMLFSQDIQKIKEIEDGTTLEDEKNRIPHSLICKRCSDAVHQNKYDVMDFKNCSLKEVIRSVPNDKPIVSIASLPEFPFHVNKNILENEKESVLVFTKADQVLKTSSATSTRLPIFFKDYFKYHLGLQVNKVLAVSSLKKWNLSGLLSNLRNNSYFLGNPNVGKSTLMNSLIQRYNGTKLDFNSNISDDMVNDAQHKHLRKAQLAGVSHIPNLTRECQGYQVDKKRIYDLPGYSENVDELPLERIVKSNWLEWVRKTNLFDTKKVKKKPYITIKGTENGRCYTIGGLFFLQPPPYSINQIIKFIPGEPYIFKNVTRALETFKSVYGNDTPHPLEKYCGINDEYCDITKYQRHVIPPFQGSIEIVFKDIGYILLRSTGRYSFNGLYEIWVPKGISVCIREPLEKLIEEGYVQYTESKNKISSCPKGRPLVSSTYIMDPNEEDTFAKIREMYLDRTENEISVRRLVKEDPLEVVSNKHDTPPNLYWHYKW.

A mitochondrion-targeting transit peptide spans 1-24 (MFVVRRSIVFQQSRRQFSGSIAWL). The region spanning 118 to 299 (LKEVIRSVPN…IYDLPGYSEN (182 aa)) is the CP-type G domain.

It belongs to the TRAFAC class YlqF/YawG GTPase family. GEP3 subfamily.

It localises to the mitochondrion. In terms of biological role, may be involved in the mitochondrial lipid metabolism. The chain is Genetic interactor of prohibitins 3, mitochondrial (GEP3) from Vanderwaltozyma polyspora (strain ATCC 22028 / DSM 70294 / BCRC 21397 / CBS 2163 / NBRC 10782 / NRRL Y-8283 / UCD 57-17) (Kluyveromyces polysporus).